The primary structure comprises 431 residues: Adenylosuccinate synthetase (431 aa).

Residues 13-19 and 41-43 contribute to the GTP site; these read GDEGKGK and GHT. Asp-14 functions as the Proton acceptor in the catalytic mechanism. Positions 14 and 41 each coordinate Mg(2+). IMP contacts are provided by residues 14–17, 39–42, Thr-130, Arg-144, Gln-225, Thr-240, and Arg-304; these read DEGK and NAGH. His-42 functions as the Proton donor in the catalytic mechanism. 300–306 contacts substrate; sequence ATTGRKR. GTP is bound by residues Arg-306, 332 to 334, and 415 to 417; these read KLD and STG.

Belongs to the adenylosuccinate synthetase family. As to quaternary structure, homodimer. The cofactor is Mg(2+).

Its subcellular location is the cytoplasm. The enzyme catalyses IMP + L-aspartate + GTP = N(6)-(1,2-dicarboxyethyl)-AMP + GDP + phosphate + 2 H(+). It participates in purine metabolism; AMP biosynthesis via de novo pathway; AMP from IMP: step 1/2. Plays an important role in the de novo pathway of purine nucleotide biosynthesis. Catalyzes the first committed step in the biosynthesis of AMP from IMP. This Shewanella halifaxensis (strain HAW-EB4) protein is Adenylosuccinate synthetase.